The chain runs to 401 residues: MTTLGTPLSPSATKVMLLGSGELGKEVLIALQRLGVETIAVDRYDNAPGQQVAHHARTIAMSDPDQLKALIEAEKPHLVVPEIEAIATPMLETLEAAGTVRVIPTARAARLTMDREGIRRLAAESLGLPTSPYKFCDSLDELQAAIDGGIGYPCVVKPVMSSSGKGQSKIDGPEGVKAAWDYAMAGGRVSHGRVIVEGFIDFDYEITLLTVRAMGASGQVETQFCAPIGHVQVSGDYVESWQPQPMHPAALETAQRIAQAVTADLGGMGLFGVELFVKGEQVWFSEVSPRPHDTGMVTMATQWQNEFELHARAILGLPVDTTLRSPGASAVIYGGVDAQGVVFDGVDQALSVPQTEVRLFGKPESFVKRRMGVALAYADDVDTARTRAKEAASRVRPRAVG.

N(1)-(5-phospho-beta-D-ribosyl)glycinamide is bound by residues 22-23 (EL) and Glu82. ATP contacts are provided by residues Arg115, Lys157, 162 to 167 (SSGKGQ), 197 to 200 (EGFI), and Glu205. Positions 120 to 315 (RLAAESLGLP…EFELHARAIL (196 aa)) constitute an ATP-grasp domain. Residues Glu274 and Glu286 each coordinate Mg(2+). N(1)-(5-phospho-beta-D-ribosyl)glycinamide contacts are provided by residues Asp293, Lys362, and 369-370 (RR).

Belongs to the PurK/PurT family. As to quaternary structure, homodimer.

It carries out the reaction N(1)-(5-phospho-beta-D-ribosyl)glycinamide + formate + ATP = N(2)-formyl-N(1)-(5-phospho-beta-D-ribosyl)glycinamide + ADP + phosphate + H(+). It functions in the pathway purine metabolism; IMP biosynthesis via de novo pathway; N(2)-formyl-N(1)-(5-phospho-D-ribosyl)glycinamide from N(1)-(5-phospho-D-ribosyl)glycinamide (formate route): step 1/1. Its function is as follows. Involved in the de novo purine biosynthesis. Catalyzes the transfer of formate to 5-phospho-ribosyl-glycinamide (GAR), producing 5-phospho-ribosyl-N-formylglycinamide (FGAR). Formate is provided by PurU via hydrolysis of 10-formyl-tetrahydrofolate. This Cupriavidus necator (strain ATCC 17699 / DSM 428 / KCTC 22496 / NCIMB 10442 / H16 / Stanier 337) (Ralstonia eutropha) protein is Formate-dependent phosphoribosylglycinamide formyltransferase.